We begin with the raw amino-acid sequence, 86 residues long: RNA-binding protein Hfq (86 aa).

The Sm domain maps to 9 to 68 (DPYLNVLRKERIPVSIYLVNGIKLQGQVESFDQFVVLLKNTVSQMVYKHAISTVVPSRPV).

The protein belongs to the Hfq family. Homohexamer.

Its function is as follows. RNA chaperone that binds small regulatory RNA (sRNAs) and mRNAs to facilitate mRNA translational regulation in response to envelope stress, environmental stress and changes in metabolite concentrations. Also binds with high specificity to tRNAs. The chain is RNA-binding protein Hfq from Saccharophagus degradans (strain 2-40 / ATCC 43961 / DSM 17024).